A 356-amino-acid polypeptide reads, in one-letter code: S-adenosylmethionine:tRNA ribosyltransferase-isomerase (356 aa).

It belongs to the QueA family. As to quaternary structure, monomer.

The protein localises to the cytoplasm. The enzyme catalyses 7-aminomethyl-7-carbaguanosine(34) in tRNA + S-adenosyl-L-methionine = epoxyqueuosine(34) in tRNA + adenine + L-methionine + 2 H(+). Its pathway is tRNA modification; tRNA-queuosine biosynthesis. Its function is as follows. Transfers and isomerizes the ribose moiety from AdoMet to the 7-aminomethyl group of 7-deazaguanine (preQ1-tRNA) to give epoxyqueuosine (oQ-tRNA). In Xanthomonas axonopodis pv. citri (strain 306), this protein is S-adenosylmethionine:tRNA ribosyltransferase-isomerase.